The following is a 386-amino-acid chain: Methylthioribose-1-phosphate isomerase (386 aa).

D258 functions as the Proton donor in the catalytic mechanism.

It belongs to the eIF-2B alpha/beta/delta subunits family. MtnA subfamily.

It localises to the cytoplasm. The protein resides in the nucleus. The enzyme catalyses 5-(methylsulfanyl)-alpha-D-ribose 1-phosphate = 5-(methylsulfanyl)-D-ribulose 1-phosphate. It functions in the pathway amino-acid biosynthesis; L-methionine biosynthesis via salvage pathway; L-methionine from S-methyl-5-thio-alpha-D-ribose 1-phosphate: step 1/6. Its function is as follows. Catalyzes the interconversion of methylthioribose-1-phosphate (MTR-1-P) into methylthioribulose-1-phosphate (MTRu-1-P). The protein is Methylthioribose-1-phosphate isomerase of Postia placenta (strain ATCC 44394 / Madison 698-R) (Brown rot fungus).